Here is a 381-residue protein sequence, read N- to C-terminus: MSDDSHLETKVVTDGTTGEKKTISYEPCRVLGSGSFGVVIQAKLVGTPGFIAVKRVLQDKRYKNRELQIMRAISHPNIIKLIAFFHTHNPSKDETHLCLLLEYMPETVFDDMRWYTRRRKSIPNLSIKLYAFQLFRALAYLHSTGVCHRDIKPQNLLVDYKTGILKLCDFGSAKVLVPSEPNVSYICSRYYRAPELVFGATHYTTKIDVWSAACVIAELFIGRPLFPGDSSVEQLVEIIRVLGTPSYHEISVMNPNYVNHSLPNVRPHTLESVMPHNCTKNAMDLLHKMLTYVPSKRISAIEVLTHPFFDELRDPNCMYHCSRDEGTIERHLPPLFNFNLAELSIRPNLNKAILPPHVYESLDVDINNFEPIVVKQADADS.

A Protein kinase domain is found at 25–309; that stretch reads YEPCRVLGSG…AIEVLTHPFF (285 aa). ATP-binding positions include 31 to 39 and Lys-54; that span reads LGSGSFGVV. Catalysis depends on Asp-150, which acts as the Proton acceptor. Residue Ser-184 is modified to Phosphoserine. The residue at position 185 (Tyr-185) is a Phosphotyrosine.

This sequence belongs to the protein kinase superfamily. CMGC Ser/Thr protein kinase family. GSK-3 subfamily.

The catalysed reaction is L-seryl-[protein] + ATP = O-phospho-L-seryl-[protein] + ADP + H(+). It catalyses the reaction L-threonyl-[protein] + ATP = O-phospho-L-threonyl-[protein] + ADP + H(+). The sequence is that of Protein kinase gsk31 (gsk31) from Schizosaccharomyces pombe (strain 972 / ATCC 24843) (Fission yeast).